A 190-amino-acid chain; its full sequence is Probable gluconokinase (190 aa).

Gly-7–Thr-14 is an ATP binding site.

It belongs to the gluconokinase GntK/GntV family.

It catalyses the reaction D-gluconate + ATP = 6-phospho-D-gluconate + ADP + H(+). It functions in the pathway carbohydrate acid metabolism; D-gluconate degradation. The protein is Probable gluconokinase (idnk) of Xenopus tropicalis (Western clawed frog).